A 634-amino-acid polypeptide reads, in one-letter code: MINITLPDGSRREFESPVSVMQVAQSIGAGLAKATIAGQVDGQLVDASDVIDHDASLRIITAKDAEGVEIIRHSCAHLVGHAVKQLYPEVKMVIGPVIAEGFYYDIYSERPFTPEDMAAIEQRMQELIAQDYDVIKKVTPRAEVIEVFAQRGEEYKLRLIEDMSEDITAMGLYYHQEYVDMCRGPHVPNTRFLKAFKLTRISGAYWRGDAKNEQLQRIYGTAWADKKQLDAYILRMEEADKRDHRRIGKAQDLFHLQEEAPGLVFWHPKGWSLWQVVEQYMRKVYRDSGYGEVRCPQILDVSLWQKSGHWDNYQDAMFFTESEKRTYAVKPMNCPGHVQVFNQGLHSYRDLPIRYGEFGACHRNEPSGALHGILRVRGFTQDDGHVFCLEPQIESEVTAFHQQALAVYTAFGFDDIQIKIALRPEKRLGDDATWDKAEAALRSALGVCGVEWQELPGEGAFYGPKIEYHLKDAIGRTWQLGTMQVDFMMPGRLGAEYVDENSQKKHPVMLHRAIVGSMERFIGILIEHHAGAFPSWLAPVQVVVANITDAQAEYVDSVRKTLANQGFRVSADLRNEKIGYKIREHTLQRVPYLLVVGDREKENGAVAVRTRSGEDLGTMTVSAFIERLQAEQAA.

Positions 1-61 (MINITLPDGS…DHDASLRIIT (61 aa)) constitute a TGS domain. Residues 243-534 (DHRRIGKAQD…LIEHHAGAFP (292 aa)) are catalytic. Cysteine 334, histidine 385, and histidine 511 together coordinate Zn(2+).

This sequence belongs to the class-II aminoacyl-tRNA synthetase family. As to quaternary structure, homodimer. It depends on Zn(2+) as a cofactor.

It is found in the cytoplasm. It carries out the reaction tRNA(Thr) + L-threonine + ATP = L-threonyl-tRNA(Thr) + AMP + diphosphate + H(+). Functionally, catalyzes the attachment of threonine to tRNA(Thr) in a two-step reaction: L-threonine is first activated by ATP to form Thr-AMP and then transferred to the acceptor end of tRNA(Thr). Also edits incorrectly charged L-seryl-tRNA(Thr). The protein is Threonine--tRNA ligase of Xanthomonas axonopodis pv. citri (strain 306).